The following is a 310-amino-acid chain: Prohibitin-2 (310 aa).

Residues 38-58 (FAGLGGLLLLGGGALFINNAL) traverse the membrane as a helical; Signal-anchor for type II membrane protein segment. Residues 130–144 (DVVQLPTIYRTLGQD) are interaction with ATG8. An AIM motif is present at residues 138–141 (YRTL). The stretch at 212–253 (NAVEAKQIAQQDAQRAAFVVDKARQEKQGMVVRAQGEAKSAE) forms a coiled coil.

This sequence belongs to the prohibitin family. As to quaternary structure, the mitochondrial prohibitin complex consists of two subunits (PHB1 and PHB2). The subunits assemble into a membrane-associated ring-shaped supercomplex of approximately 1 mDa. The mitochondrial prohibitin complex interacts with the m-AAA protease, a heterohexamer composed of YTA12/RCA1 and YTA10/AFG3. The mitochondrial prohibitin complex interacts with ATG8 and the interaction may support mitophagosome assembly. Post-translationally, the N-terminus is blocked.

Its subcellular location is the mitochondrion inner membrane. In terms of biological role, prohibitin probably acts as a holdase/unfoldase for the stabilization of newly synthesized mitochondrial proteins. Involved in mitophagy; may act as an adapter for ATG8 that supports mitophagosome assembly. Negatively regulates the proteolytic processing of ATG32 via the i-AAA protease. Acts as a negative regulator of the m-AAA protease. This Saccharomyces cerevisiae (strain ATCC 204508 / S288c) (Baker's yeast) protein is Prohibitin-2 (PHB2).